Reading from the N-terminus, the 193-residue chain is Peptidyl-tRNA hydrolase (193 aa).

TRNA is bound at residue His-17. The active-site Proton acceptor is the His-22. 3 residues coordinate tRNA: Phe-68, Asn-70, and Asn-116.

It belongs to the PTH family. Monomer.

Its subcellular location is the cytoplasm. It carries out the reaction an N-acyl-L-alpha-aminoacyl-tRNA + H2O = an N-acyl-L-amino acid + a tRNA + H(+). Hydrolyzes ribosome-free peptidyl-tRNAs (with 1 or more amino acids incorporated), which drop off the ribosome during protein synthesis, or as a result of ribosome stalling. In terms of biological role, catalyzes the release of premature peptidyl moieties from peptidyl-tRNA molecules trapped in stalled 50S ribosomal subunits, and thus maintains levels of free tRNAs and 50S ribosomes. The polypeptide is Peptidyl-tRNA hydrolase (Xanthomonas axonopodis pv. citri (strain 306)).